The chain runs to 983 residues: ABC transporter A family member 2 (983 aa).

6 helical membrane-spanning segments follow: residues 33–53, 221–241, 279–299, 305–325, 339–359, and 416–436; these read FLQL…QAAM, IVAL…FGFV, ILTA…QFDF, FPVV…LAFM, VGFF…SGFP, and VLTI…WFVL. The ABC transporter domain occupies 518–763; sequence VQIRGLAKTY…FGTGFIANIS (246 aa). 564–571 serves as a coordination point for ATP; sequence GPNGAGKT. Positions 963-983 are disordered; it reads RSGSTSSRRFSRSGSSRRFSS.

The protein belongs to the ABC transporter superfamily. ABCA family. CPR flippase (TC 3.A.1.211) subfamily.

The protein resides in the membrane. The polypeptide is ABC transporter A family member 2 (ABCA2) (Arabidopsis thaliana (Mouse-ear cress)).